Consider the following 256-residue polypeptide: HTH-type transcriptional regulator PrtR (256 aa).

The HTH cro/C1-type domain occupies 16 to 69 (LKQAMAMRNLKQETLAEAAGVSQNTIHKLTSGKAQSTRKLIEIAAALGVSPVWL). The H-T-H motif DNA-binding region spans 27 to 46 (QETLAEAAGVSQNTIHKLTS).

Functionally, represses the promoter activity of the prtN gene. This chain is HTH-type transcriptional regulator PrtR (prtR), found in Pseudomonas aeruginosa (strain ATCC 15692 / DSM 22644 / CIP 104116 / JCM 14847 / LMG 12228 / 1C / PRS 101 / PAO1).